Here is a 348-residue protein sequence, read N- to C-terminus: Holliday junction branch migration complex subunit RuvB (348 aa).

The interval 1-20 is disordered; it reads MKPPARMVSPERRSDDVGDT. A large ATPase domain (RuvB-L) region spans residues 1-183; that stretch reads MKPPARMVSP…FGIPIRLNFY (183 aa). Residues L22, R23, G64, K67, T68, T69, 130–132, R173, Y183, and R220 contribute to the ATP site; that span reads EDF. T68 is a binding site for Mg(2+). The small ATPAse domain (RuvB-S) stretch occupies residues 184 to 254; that stretch reads TVEELEGIVT…IADHALSALE (71 aa). Positions 257–348 are head domain (RuvB-H); that stretch reads AAGLDAMDRR…FGLFGSEDDA (92 aa). R293, R312, and R317 together coordinate DNA.

Belongs to the RuvB family. As to quaternary structure, homohexamer. Forms an RuvA(8)-RuvB(12)-Holliday junction (HJ) complex. HJ DNA is sandwiched between 2 RuvA tetramers; dsDNA enters through RuvA and exits via RuvB. An RuvB hexamer assembles on each DNA strand where it exits the tetramer. Each RuvB hexamer is contacted by two RuvA subunits (via domain III) on 2 adjacent RuvB subunits; this complex drives branch migration. In the full resolvosome a probable DNA-RuvA(4)-RuvB(12)-RuvC(2) complex forms which resolves the HJ.

The protein localises to the cytoplasm. The enzyme catalyses ATP + H2O = ADP + phosphate + H(+). Functionally, the RuvA-RuvB-RuvC complex processes Holliday junction (HJ) DNA during genetic recombination and DNA repair, while the RuvA-RuvB complex plays an important role in the rescue of blocked DNA replication forks via replication fork reversal (RFR). RuvA specifically binds to HJ cruciform DNA, conferring on it an open structure. The RuvB hexamer acts as an ATP-dependent pump, pulling dsDNA into and through the RuvAB complex. RuvB forms 2 homohexamers on either side of HJ DNA bound by 1 or 2 RuvA tetramers; 4 subunits per hexamer contact DNA at a time. Coordinated motions by a converter formed by DNA-disengaged RuvB subunits stimulates ATP hydrolysis and nucleotide exchange. Immobilization of the converter enables RuvB to convert the ATP-contained energy into a lever motion, pulling 2 nucleotides of DNA out of the RuvA tetramer per ATP hydrolyzed, thus driving DNA branch migration. The RuvB motors rotate together with the DNA substrate, which together with the progressing nucleotide cycle form the mechanistic basis for DNA recombination by continuous HJ branch migration. Branch migration allows RuvC to scan DNA until it finds its consensus sequence, where it cleaves and resolves cruciform DNA. This is Holliday junction branch migration complex subunit RuvB from Bradyrhizobium sp. (strain BTAi1 / ATCC BAA-1182).